Here is a 394-residue protein sequence, read N- to C-terminus: MTRSLRVLYIGLFLVLLLALGAWSLRSFFGFSTNADATVLNGRWTKAVETHYDEEFPIKRLGTNLWAALDYKLFNEGRPGVVLGRDHWLYSDEEFNPAVNEDQNLEGNYALVEGVRQKLKAQGIQLVMAIVPAKVRLYPEHLGEVKPASIHANLYQDFHARVAADKIIAPDLLGPLQQAKLGGKQVFLRTDTHWTPDGAEIAAKQLAKTIADKTPLNGEPQRFVTEAEKTEPHKGDLRLFLPLDPLFENLMPPKEPLEKRVTHLAETKGDDALFSDSETPVALVGTSYSANPNWNFVGALKQALGSDVISYAEDGHGPILPMLSYLKSDDFKNNPPQVLIWEFPERYLPVNNEIGDADPSWVAQLKQAGSRQQNMALNTPVNHQKSETPDRAQN.

An N-terminal signal peptide occupies residues 1-37; sequence MTRSLRVLYIGLFLVLLLALGAWSLRSFFGFSTNADA. Residue aspartate 191 is part of the active site. The Proton acceptor role is filled by histidine 193. Catalysis depends on serine 287, which acts as the Nucleophile.

It belongs to the AlgJ family.

The protein localises to the cell inner membrane. It localises to the periplasm. Its pathway is glycan biosynthesis; alginate biosynthesis. Together with AlgI and AlgF, forms an inner membrane complex which probably interacts with the alginate polymerization-transport complex and adds acetyl groups at the O-2 and O-3 positions of mannuronate residues. Acetylation of alginate is important for the architecture of biofilms and increases the ability of alginate to act as a defense barrier. The sequence is that of Probable alginate O-acetylase AlgJ (algJ) from Pseudomonas fluorescens.